Consider the following 126-residue polypeptide: Probable 4-amino-4-deoxy-L-arabinose-phosphoundecaprenol flippase subunit ArnF (126 aa).

Residues Met1–Tyr4 lie on the Cytoplasmic side of the membrane. A helical membrane pass occupies residues Ile5–Val25. At Val26–Ser49 the chain is on the periplasmic side. The helical transmembrane segment at Leu50–Thr70 threads the bilayer. Residues Leu71–Ala79 lie on the Cytoplasmic side of the membrane. A helical transmembrane segment spans residues Tyr80 to Phe100. Residues Asn101–Glu102 lie on the Periplasmic side of the membrane. The chain crosses the membrane as a helical span at residues Thr103–Ser123. Topologically, residues Arg124–Glu126 are cytoplasmic.

This sequence belongs to the ArnF family. Heterodimer of ArnE and ArnF.

Its subcellular location is the cell inner membrane. The protein operates within bacterial outer membrane biogenesis; lipopolysaccharide biosynthesis. Functionally, translocates 4-amino-4-deoxy-L-arabinose-phosphoundecaprenol (alpha-L-Ara4N-phosphoundecaprenol) from the cytoplasmic to the periplasmic side of the inner membrane. The protein is Probable 4-amino-4-deoxy-L-arabinose-phosphoundecaprenol flippase subunit ArnF of Photorhabdus laumondii subsp. laumondii (strain DSM 15139 / CIP 105565 / TT01) (Photorhabdus luminescens subsp. laumondii).